Reading from the N-terminus, the 350-residue chain is Dihydroorotate dehydrogenase (quinone) (350 aa).

FMN is bound by residues 65-69 and threonine 89; that span reads AGLDK. Lysine 69 contributes to the substrate binding site. Residue 114–118 coordinates substrate; that stretch reads NRLGF. FMN is bound by residues asparagine 149 and asparagine 182. A substrate-binding site is contributed by asparagine 182. The active-site Nucleophile is the serine 185. Asparagine 187 serves as a coordination point for substrate. Residues lysine 227 and threonine 255 each contribute to the FMN site. 256–257 serves as a coordination point for substrate; that stretch reads NT. FMN-binding positions include glycine 278, glycine 307, and 328–329; that span reads YT.

Belongs to the dihydroorotate dehydrogenase family. Type 2 subfamily. As to quaternary structure, monomer. The cofactor is FMN.

It localises to the cell membrane. The enzyme catalyses (S)-dihydroorotate + a quinone = orotate + a quinol. The protein operates within pyrimidine metabolism; UMP biosynthesis via de novo pathway; orotate from (S)-dihydroorotate (quinone route): step 1/1. Functionally, catalyzes the conversion of dihydroorotate to orotate with quinone as electron acceptor. The chain is Dihydroorotate dehydrogenase (quinone) from Polaromonas naphthalenivorans (strain CJ2).